The following is a 557-amino-acid chain: Probable protein kinase UbiB (557 aa).

Residues 121 to 509 (AFDTTPLASA…RKLQTRVVTA (389 aa)) form the Protein kinase domain. Residues 127–135 (LASASIAQV) and Lys-154 each bind ATP. Catalysis depends on Asp-289, which acts as the Proton acceptor. 2 consecutive transmembrane segments (helical) span residues 506–526 (VVTA…YGLH) and 535–555 (VPVW…IAWL).

It belongs to the ABC1 family. UbiB subfamily.

The protein localises to the cell inner membrane. The protein operates within cofactor biosynthesis; ubiquinone biosynthesis [regulation]. Functionally, is probably a protein kinase regulator of UbiI activity which is involved in aerobic coenzyme Q (ubiquinone) biosynthesis. The chain is Probable protein kinase UbiB from Xanthomonas campestris pv. campestris (strain B100).